Reading from the N-terminus, the 428-residue chain is Enolase (428 aa).

A (2R)-2-phosphoglycerate-binding site is contributed by Gln-163. Glu-205 serves as the catalytic Proton donor. Mg(2+) contacts are provided by Asp-242, Glu-285, and Asp-312. Lys-337, Arg-366, Ser-367, and Lys-388 together coordinate (2R)-2-phosphoglycerate. Residue Lys-337 is the Proton acceptor of the active site.

The protein belongs to the enolase family. Requires Mg(2+) as cofactor.

The protein resides in the cytoplasm. It localises to the secreted. The protein localises to the cell surface. It catalyses the reaction (2R)-2-phosphoglycerate = phosphoenolpyruvate + H2O. It participates in carbohydrate degradation; glycolysis; pyruvate from D-glyceraldehyde 3-phosphate: step 4/5. Functionally, catalyzes the reversible conversion of 2-phosphoglycerate (2-PG) into phosphoenolpyruvate (PEP). It is essential for the degradation of carbohydrates via glycolysis. The protein is Enolase of Polynucleobacter asymbioticus (strain DSM 18221 / CIP 109841 / QLW-P1DMWA-1) (Polynucleobacter necessarius subsp. asymbioticus).